The following is a 1156-amino-acid chain: MGDTAPPQAPAGGLGGASGAGLLGGGSVTPRVHSAIVERLRARIAVCRQHHLSCEGRYERGRAESSDRERESTLQLLSLVQHGQGARKAGKHTKATATAATTTAPPPPPAAPPAASQAAATAAPPPPPDYHHHHQQHLLNSSNNGGSGGINGEQQPPASTPGDQRNSALIALQGSLKRKQVVNLSPANSKRPNGFVDNSFLDIKRIRVGENLSAGQGGLQINNGQSQIMSGTLPMSQAPLRKTNTLPSHTHSPGNGLFNMGLKEVKKEPGETLSCSKHMDGQMTQENIFPNRYGDDPGEQLMDPELQELFNELTNISVPPMSDLELENMINATIKQDDPFNIDLGQQSQRSTPRPSLPMEKIVIKSEYSPGLTQGPSGSPQLRPPSAGPAFSMANSALSTSSPIPSVPQSQAQPQTGSGASRALPSWQEVSHAQQLKQIAANRQQHARMQQHQQQHQPTNWSALPSSAGPSPGPFGQEKIPSPSFGQQTFSPQSSPMPGVAGGSGQSKVMANYMYKAGPSAQGGHLDVLMQQKPQDLSRSFINNPHPAMEPRQGNTKPLFHFNSDQANQQMPSVLPSQNKPSLLHYTQQQQQQQQQQQQQQQQQQQQQQQQQQQQQQQQQQSSISAQQQQQQQSSISAQQQQQQQQQQQQQQQQQQQQQQQQQQQPSSQPAQSLPSQPLLRSPLPLQQKLLLQQMQNQPIAGMGYQVSQQQRQDQHSVVGQNTGPSPSPNPCSNPNTGSGYMNSQQSLLNQQLMGKKQTLQRQIMEQKQQLLLQQQMLADAEKIAPQDQINRHLSRPPPDYKDQRRNVGNMQPTAQYSGGSSTISLNSNQALANPVSTHTILTPNSSLLSTSHGTRMPSLSTAVQNMGMYGNLPCNQPNTYSVTSGMNQLTQQRNPKQLLANQNNPMMPRPPTLGPSNNNNVATFGAGSVGNSQQLRPNLTHSMASMPPQRTSNVMITSNTTAPNWASQEGTSKQQEALTSAGVRFPTGTPAAYTPNQSLQQAVGSQQFSQRAVAPPNQLTPAVQMRPMNQMSQTLNGQTMGPLRGLNLRPNQLSTQILPNLNQSGTGLNQSRTGINQPPSLTPSNFPSPNQSSRAFQGTDHSSDLAFDFLSQQNDNMGPALNSDADFIDSLLKTEPGNDDWMKDINLDEILGNNS.

The segment at 81–165 (QHGQGARKAG…PPASTPGDQR (85 aa)) is disordered. The span at 113–122 (PAASQAAATA) shows a compositional bias: low complexity. A compositionally biased stretch (polar residues) spans 153–165 (EQQPPASTPGDQR). Residue S175 is modified to Phosphoserine. Disordered regions lie at residues 340–359 (FNID…SLPM), 369–506 (SPGL…GSGQ), 531–630 (QQKP…QQQQ), 658–680 (QQQQ…QPLL), 705–743 (YQVS…GYMN), 784–820 (IAPQ…YSGG), and 1059–1100 (LPNL…FQGT). Polar residues-rich tracts occupy residues 344–354 (LGQQSQRSTPR), 371–380 (GLTQGPSGSP), 393–419 (MANS…TGSG), and 428–437 (QEVSHAQQLK). Low complexity predominate over residues 440-470 (AANRQQHARMQQHQQQHQPTNWSALPSSAGP). Composition is skewed to polar residues over residues 484–496 (SFGQ…QSSP), 532–543 (QKPQDLSRSFIN), and 563–587 (NSDQ…LHYT). Positions 588-630 (QQQQQQQQQQQQQQQQQQQQQQQQQQQQQQQQQQSSISAQQQQ) are enriched in low complexity. 2 stretches are compositionally biased toward low complexity: residues 706 to 725 (QVSQ…NTGP) and 733 to 743 (SNPNTGSGYMN). A compositionally biased stretch (polar residues) spans 807-820 (NVGNMQPTAQYSGG).

This sequence belongs to the mastermind family. Interacts through its N-terminal region with the ankyrin repeat region of the Notch proteins NOTCH1, NOTCH2, NOTCH3 and NOTCH4. Forms a DNA-binding complex with Notch proteins and RBPSUH/RBP-J kappa. Widely expressed with high levels detected in placenta, salivary gland and skeletal muscle.

It localises to the nucleus speckle. Its function is as follows. Acts as a transcriptional coactivator for NOTCH proteins. Has been shown to amplify NOTCH-induced transcription of HES1. Potentiates activation by NOTCH3 and NOTCH4 more efficiently than MAML1 or MAML3. The sequence is that of Mastermind-like protein 2 (MAML2) from Homo sapiens (Human).